Here is a 383-residue protein sequence, read N- to C-terminus: ATP phosphoribosyltransferase regulatory subunit (383 aa).

The protein belongs to the class-II aminoacyl-tRNA synthetase family. HisZ subfamily. As to quaternary structure, heteromultimer composed of HisG and HisZ subunits.

Its subcellular location is the cytoplasm. It participates in amino-acid biosynthesis; L-histidine biosynthesis; L-histidine from 5-phospho-alpha-D-ribose 1-diphosphate: step 1/9. In terms of biological role, required for the first step of histidine biosynthesis. May allow the feedback regulation of ATP phosphoribosyltransferase activity by histidine. The polypeptide is ATP phosphoribosyltransferase regulatory subunit (Paraburkholderia xenovorans (strain LB400)).